Here is a 211-residue protein sequence, read N- to C-terminus: Large ribosomal subunit protein uL3 (211 aa).

A compositionally biased stretch (polar residues) spans 130–139 (QDATHGNSLS). The tract at residues 130–151 (QDATHGNSLSHRAPGSIGQNQT) is disordered. Glutamine 150 is subject to N5-methylglutamine.

Belongs to the universal ribosomal protein uL3 family. Part of the 50S ribosomal subunit. Forms a cluster with proteins L14 and L19. Post-translationally, methylated by PrmB.

Its function is as follows. One of the primary rRNA binding proteins, it binds directly near the 3'-end of the 23S rRNA, where it nucleates assembly of the 50S subunit. This is Large ribosomal subunit protein uL3 from Alcanivorax borkumensis (strain ATCC 700651 / DSM 11573 / NCIMB 13689 / SK2).